Reading from the N-terminus, the 252-residue chain is Imidazole glycerol phosphate synthase subunit HisF (252 aa).

Residues Asp-11 and Asp-130 contribute to the active site.

The protein belongs to the HisA/HisF family. In terms of assembly, heterodimer of HisH and HisF.

It is found in the cytoplasm. The enzyme catalyses 5-[(5-phospho-1-deoxy-D-ribulos-1-ylimino)methylamino]-1-(5-phospho-beta-D-ribosyl)imidazole-4-carboxamide + L-glutamine = D-erythro-1-(imidazol-4-yl)glycerol 3-phosphate + 5-amino-1-(5-phospho-beta-D-ribosyl)imidazole-4-carboxamide + L-glutamate + H(+). It functions in the pathway amino-acid biosynthesis; L-histidine biosynthesis; L-histidine from 5-phospho-alpha-D-ribose 1-diphosphate: step 5/9. In terms of biological role, IGPS catalyzes the conversion of PRFAR and glutamine to IGP, AICAR and glutamate. The HisF subunit catalyzes the cyclization activity that produces IGP and AICAR from PRFAR using the ammonia provided by the HisH subunit. In Aromatoleum aromaticum (strain DSM 19018 / LMG 30748 / EbN1) (Azoarcus sp. (strain EbN1)), this protein is Imidazole glycerol phosphate synthase subunit HisF.